Here is a 325-residue protein sequence, read N- to C-terminus: NADH-quinone oxidoreductase subunit H (325 aa).

8 helical membrane passes run 11–31 (ILLT…CGAF), 81–101 (VIFT…FAIV), 114–134 (IGIL…LFAG), 154–174 (LSYE…AGSF), 186–206 (VWNV…GVAV), 237–257 (FFVG…TLFF), 265–285 (LPPF…FILI), and 304–324 (ICLP…LWQA).

It belongs to the complex I subunit 1 family. In terms of assembly, NDH-1 is composed of 13 different subunits. Subunits NuoA, H, J, K, L, M, N constitute the membrane sector of the complex.

It localises to the cell inner membrane. It carries out the reaction a quinone + NADH + 5 H(+)(in) = a quinol + NAD(+) + 4 H(+)(out). Functionally, NDH-1 shuttles electrons from NADH, via FMN and iron-sulfur (Fe-S) centers, to quinones in the respiratory chain. The immediate electron acceptor for the enzyme in this species is believed to be ubiquinone. Couples the redox reaction to proton translocation (for every two electrons transferred, four hydrogen ions are translocated across the cytoplasmic membrane), and thus conserves the redox energy in a proton gradient. This subunit may bind ubiquinone. The chain is NADH-quinone oxidoreductase subunit H from Escherichia coli O139:H28 (strain E24377A / ETEC).